The primary structure comprises 747 residues: Major facilitator superfamily domain-containing protein 6-B (747 aa).

The next 11 helical transmembrane spans lie at 15-35, 75-95, 222-242, 271-291, 306-326, 391-411, 420-440, 453-470, 485-507, 520-540, and 546-566; these read LLFF…CVLQ, KAVL…IGFV, TIFL…APAV, WGIA…TIFI, IAFI…TQFH, VLFV…FLFW, TTLF…AYFI, VLYI…YISY, GLTH…PPAL, LGLG…FFGA, and GLGM…WLLG. Polar residues-rich tracts occupy residues 597–606 and 652–668; these read NQSTSQPNSD and NNDC…QTSA. 2 disordered regions span residues 597–625 and 652–747; these read NQST…NKPA and NNDC…PTTH. A compositionally biased stretch (low complexity) spans 675-685; that stretch reads STSSQPNASSS.

It belongs to the major facilitator superfamily. MFSD6 family.

Its subcellular location is the membrane. The protein is Major facilitator superfamily domain-containing protein 6-B (mfsd6b) of Danio rerio (Zebrafish).